The primary structure comprises 305 residues: MLDTSIQALINKWQKYLVLQRNYSNHTVISYNNDLKHFLEFMNYYNSEFVTINHIKTADIRLIRSWLAKRHCDNFTTSSISRGLSAVKNFYRFLEKTTQLNSHIIFSIKSPKKTKLLPKALSEDDVVISLEHIEEYGNVKWVELRNKALLVLIYASGLRISEALSITKLHLQNLEFIRIIGKGSKERIIPWLPIAKNLITQYLEILPYKLGDNEPIFRGKQGKKLQPPVFNRELIKLKHFYGLPQHLTAHSFRHSFASHLLEHGADLRSIQELLGHKSLSTTQNYTKTSIKHLEAVYTTAYPIKK.

Residues 4–95 (TSIQALINKW…AVKNFYRFLE (92 aa)) form the Core-binding (CB) domain. One can recognise a Tyr recombinase domain in the interval 116 to 298 (LLPKALSEDD…SIKHLEAVYT (183 aa)). Active-site residues include R159, K182, H250, R253, and H276. Residue Y285 is the O-(3'-phospho-DNA)-tyrosine intermediate of the active site.

This sequence belongs to the 'phage' integrase family. XerC subfamily. Forms a cyclic heterotetrameric complex composed of two molecules of XerC and two molecules of XerD.

Its subcellular location is the cytoplasm. Site-specific tyrosine recombinase, which acts by catalyzing the cutting and rejoining of the recombining DNA molecules. The XerC-XerD complex is essential to convert dimers of the bacterial chromosome into monomers to permit their segregation at cell division. It also contributes to the segregational stability of plasmids. This Rickettsia massiliae (strain Mtu5) protein is Tyrosine recombinase XerC.